A 317-amino-acid polypeptide reads, in one-letter code: Putative pyridoxal kinase BUD17 (317 aa).

Positions 16 and 128 each coordinate substrate. Residues 190-191 (TS) and 220-232 (EIPK…SGSG) contribute to the ATP site. Substrate is bound at residue Asp233.

The protein belongs to the pyridoxine kinase family. The cofactor is a divalent metal cation.

The protein localises to the cytoplasm. It is found in the nucleus. The catalysed reaction is pyridoxal + ATP = pyridoxal 5'-phosphate + ADP + H(+). Required for synthesis of pyridoxal-5-phosphate from vitamin B6. Important for bud site selection. The chain is Putative pyridoxal kinase BUD17 (BUD17) from Saccharomyces cerevisiae (strain ATCC 204508 / S288c) (Baker's yeast).